The sequence spans 244 residues: Small ribosomal subunit protein eS4 (244 aa).

Residues 43-106 form the S4 RNA-binding domain; the sequence is LPLLLVVRDI…DENYLVLFDE (64 aa).

This sequence belongs to the eukaryotic ribosomal protein eS4 family.

In Methanococcus maripaludis (strain C6 / ATCC BAA-1332), this protein is Small ribosomal subunit protein eS4.